Here is a 305-residue protein sequence, read N- to C-terminus: Sulfate adenylyltransferase subunit 2 (305 aa).

Belongs to the PAPS reductase family. CysD subfamily. Heterodimer composed of CysD, the smaller subunit, and CysN.

It catalyses the reaction sulfate + ATP + H(+) = adenosine 5'-phosphosulfate + diphosphate. Its pathway is sulfur metabolism; hydrogen sulfide biosynthesis; sulfite from sulfate: step 1/3. Functionally, with CysN forms the ATP sulfurylase (ATPS) that catalyzes the adenylation of sulfate producing adenosine 5'-phosphosulfate (APS) and diphosphate, the first enzymatic step in sulfur assimilation pathway. APS synthesis involves the formation of a high-energy phosphoric-sulfuric acid anhydride bond driven by GTP hydrolysis by CysN coupled to ATP hydrolysis by CysD. This is Sulfate adenylyltransferase subunit 2 from Pseudomonas syringae pv. tomato (strain ATCC BAA-871 / DC3000).